The chain runs to 307 residues: Probable E3 SUMO-protein ligase RNF212 (307 aa).

Residues Cys7–Gln46 form an RING-type zinc finger. The stretch at Arg91–Ser124 forms a coiled coil. The tract at residues Leu164–Pro291 is disordered. Polar residues-rich tracts occupy residues Leu202–Lys213, Ser233–Thr252, and Ile259–Gly271.

In terms of tissue distribution, specifically expressed in meiocytes of the gonads.

It localises to the nucleus. Its subcellular location is the chromosome. The protein operates within protein modification; protein sumoylation. SUMO E3 ligase that acts as a regulator of crossing-over during meiosis: required to couple chromosome synapsis to the formation of crossover-specific recombination complexes. Localizes to recombination sites and stabilizes meiosis-specific recombination factors, such as MutS-gamma complex proteins (MSH4 and MSH5) and TEX11. May mediate sumoylation of target proteins MSH4 and/or MSH5, leading to enhance their binding to recombination sites. Acts as a limiting factor for crossover designation and/or reinforcement and plays an antagonist role with CCNB1IP1/HEI10 in the regulation of meiotic recombination. The protein is Probable E3 SUMO-protein ligase RNF212 (Rnf212) of Mus musculus (Mouse).